A 450-amino-acid chain; its full sequence is UDP-N-acetylmuramoylalanine--D-glutamate ligase (450 aa).

Residue 119–125 (GSNGKTT) coordinates ATP.

Belongs to the MurCDEF family.

It is found in the cytoplasm. The enzyme catalyses UDP-N-acetyl-alpha-D-muramoyl-L-alanine + D-glutamate + ATP = UDP-N-acetyl-alpha-D-muramoyl-L-alanyl-D-glutamate + ADP + phosphate + H(+). It functions in the pathway cell wall biogenesis; peptidoglycan biosynthesis. In terms of biological role, cell wall formation. Catalyzes the addition of glutamate to the nucleotide precursor UDP-N-acetylmuramoyl-L-alanine (UMA). The sequence is that of UDP-N-acetylmuramoylalanine--D-glutamate ligase from Streptococcus pneumoniae serotype 19F (strain G54).